A 412-amino-acid chain; its full sequence is Serine hydroxymethyltransferase (412 aa).

(6S)-5,6,7,8-tetrahydrofolate-binding positions include leucine 117 and 121–123; that span reads GHL. At lysine 226 the chain carries N6-(pyridoxal phosphate)lysine.

This sequence belongs to the SHMT family. In terms of assembly, homodimer. Pyridoxal 5'-phosphate serves as cofactor.

The protein resides in the cytoplasm. The catalysed reaction is (6R)-5,10-methylene-5,6,7,8-tetrahydrofolate + glycine + H2O = (6S)-5,6,7,8-tetrahydrofolate + L-serine. Its pathway is one-carbon metabolism; tetrahydrofolate interconversion. The protein operates within amino-acid biosynthesis; glycine biosynthesis; glycine from L-serine: step 1/1. Functionally, catalyzes the reversible interconversion of serine and glycine with tetrahydrofolate (THF) serving as the one-carbon carrier. This reaction serves as the major source of one-carbon groups required for the biosynthesis of purines, thymidylate, methionine, and other important biomolecules. Also exhibits THF-independent aldolase activity toward beta-hydroxyamino acids, producing glycine and aldehydes, via a retro-aldol mechanism. This Staphylococcus haemolyticus (strain JCSC1435) protein is Serine hydroxymethyltransferase.